The sequence spans 396 residues: Odorant receptor 49a (396 aa).

Residues 1–6 (MEKLRS) are Cytoplasmic-facing. The helical transmembrane segment at 7 to 27 (YEDFIFMANMMFKTLGYDLFH) threads the bilayer. Residues 28–34 (TPKPWWR) are Extracellular-facing. The chain crosses the membrane as a helical span at residues 35–55 (YLLVRGYFVLCTISNFYEASM). Topologically, residues 56 to 70 (VTTRIIEWESLAGSP) are cytoplasmic. A helical transmembrane segment spans residues 71–91 (SKIMRQGLHFFYMLSSQLKFI). Over 92–141 (TFMINRKRLLQLSHRLKELYPHKEQNQRKYEVNKYYLSCSTRNVLYVYYF) the chain is Extracellular. A helical membrane pass occupies residues 142–162 (VMVVMALEPLVQSCIMYLIGF). At 163-209 (GKADFTYKRIFPTRLTFDSEKPLGYVLAYVIDFTYSQFIVNVSLGTD) the chain is on the cytoplasmic side. The chain crosses the membrane as a helical span at residues 210-230 (LWMMCVSSQISMHLGYLANML). Topologically, residues 231 to 266 (ASIRPSPETEQQDCDFLASIIKRHQLMIRLQKDVNY) are extracellular. Residues 267–287 (VFGLLLASNLFTTSCLLCCMA) traverse the membrane as a helical segment. Residues 288–296 (YYTVVEGFN) are Cytoplasmic-facing. Residues 297–317 (WEGISYMMLFASVAAQFYVVS) traverse the membrane as a helical segment. Over 318–396 (SHGQMLIDLS…FAVIRQTVEK (79 aa)) the chain is Extracellular.

Belongs to the insect chemoreceptor superfamily. Heteromeric odorant receptor channel (TC 1.A.69) family. Or49a subfamily. In terms of assembly, interacts with Orco. Complexes exist early in the endomembrane system in olfactory sensory neurons (OSNs), coupling these complexes to the conserved ciliary trafficking pathway.

The protein localises to the cell membrane. Functionally, odorant receptor which mediates acceptance or avoidance behavior, depending on its substrates. The odorant receptor repertoire encodes a large collection of odor stimuli that vary widely in identity, intensity, and duration. May form a complex with Orco to form odorant-sensing units, providing sensitive and prolonged odorant signaling and calcium permeability. Involved in the behavioral responses to butanol and 2-heptanone. In Drosophila melanogaster (Fruit fly), this protein is Odorant receptor 49a (Or49a).